The primary structure comprises 761 residues: Phosphoribosylformylglycinamidine synthase subunit PurL (761 aa).

Over residues 1–13 (MTSRVDTVDNAAS) the composition is skewed to polar residues. Residues 1–23 (MTSRVDTVDNAASTPDHPQPFAE) are disordered. The active site involves His-57. Residues Tyr-60 and Lys-104 each contribute to the ATP site. Glu-106 serves as a coordination point for Mg(2+). Residues 107–110 (SHNH) and Arg-129 contribute to the substrate site. His-108 (proton acceptor) is an active-site residue. Asp-130 provides a ligand contact to Mg(2+). Gln-259 is a substrate binding site. Asp-287 provides a ligand contact to Mg(2+). 331-333 (ESQ) lines the substrate pocket. ATP contacts are provided by Asn-519 and Gly-556. Asn-557 is a binding site for Mg(2+). A substrate-binding site is contributed by Ser-559.

The protein belongs to the FGAMS family. As to quaternary structure, monomer. Part of the FGAM synthase complex composed of 1 PurL, 1 PurQ and 2 PurS subunits.

It is found in the cytoplasm. The catalysed reaction is N(2)-formyl-N(1)-(5-phospho-beta-D-ribosyl)glycinamide + L-glutamine + ATP + H2O = 2-formamido-N(1)-(5-O-phospho-beta-D-ribosyl)acetamidine + L-glutamate + ADP + phosphate + H(+). Its pathway is purine metabolism; IMP biosynthesis via de novo pathway; 5-amino-1-(5-phospho-D-ribosyl)imidazole from N(2)-formyl-N(1)-(5-phospho-D-ribosyl)glycinamide: step 1/2. Part of the phosphoribosylformylglycinamidine synthase complex involved in the purines biosynthetic pathway. Catalyzes the ATP-dependent conversion of formylglycinamide ribonucleotide (FGAR) and glutamine to yield formylglycinamidine ribonucleotide (FGAM) and glutamate. The FGAM synthase complex is composed of three subunits. PurQ produces an ammonia molecule by converting glutamine to glutamate. PurL transfers the ammonia molecule to FGAR to form FGAM in an ATP-dependent manner. PurS interacts with PurQ and PurL and is thought to assist in the transfer of the ammonia molecule from PurQ to PurL. The chain is Phosphoribosylformylglycinamidine synthase subunit PurL from Mycobacteroides abscessus (strain ATCC 19977 / DSM 44196 / CCUG 20993 / CIP 104536 / JCM 13569 / NCTC 13031 / TMC 1543 / L948) (Mycobacterium abscessus).